The sequence spans 295 residues: UDP-3-O-acyl-N-acetylglucosamine deacetylase (295 aa).

Zn(2+)-binding residues include His75, His232, and Asp236. Residue His259 is the Proton donor of the active site.

Belongs to the LpxC family. It depends on Zn(2+) as a cofactor.

The catalysed reaction is a UDP-3-O-[(3R)-3-hydroxyacyl]-N-acetyl-alpha-D-glucosamine + H2O = a UDP-3-O-[(3R)-3-hydroxyacyl]-alpha-D-glucosamine + acetate. The protein operates within glycolipid biosynthesis; lipid IV(A) biosynthesis; lipid IV(A) from (3R)-3-hydroxytetradecanoyl-[acyl-carrier-protein] and UDP-N-acetyl-alpha-D-glucosamine: step 2/6. Its function is as follows. Catalyzes the hydrolysis of UDP-3-O-myristoyl-N-acetylglucosamine to form UDP-3-O-myristoylglucosamine and acetate, the committed step in lipid A biosynthesis. This Helicobacter pylori (strain J99 / ATCC 700824) (Campylobacter pylori J99) protein is UDP-3-O-acyl-N-acetylglucosamine deacetylase.